The sequence spans 545 residues: CTP synthase (545 aa).

The segment at 1–266 (MTHFIFVTGG…DDLICERFGF (266 aa)) is amidoligase domain. Residue S13 participates in CTP binding. S13 contributes to the UTP binding site. ATP contacts are provided by residues 14–19 (SLGKGI) and D71. Residues D71 and E140 each coordinate Mg(2+). CTP is bound by residues 147-149 (DIE), 187-192 (KTKPTQ), and K223. UTP-binding positions include 187–192 (KTKPTQ) and K223. An ATP-binding site is contributed by 239–241 (KDA). One can recognise a Glutamine amidotransferase type-1 domain in the interval 292–543 (RVAMVGKYVE…IDAAKTQHQK (252 aa)). Residue G353 participates in L-glutamine binding. The Nucleophile; for glutamine hydrolysis role is filled by C380. L-glutamine-binding positions include 381 to 384 (LGMQ), E404, and R471. Residues H516 and E518 contribute to the active site.

The protein belongs to the CTP synthase family. Homotetramer.

It carries out the reaction UTP + L-glutamine + ATP + H2O = CTP + L-glutamate + ADP + phosphate + 2 H(+). The catalysed reaction is L-glutamine + H2O = L-glutamate + NH4(+). The enzyme catalyses UTP + NH4(+) + ATP = CTP + ADP + phosphate + 2 H(+). Its pathway is pyrimidine metabolism; CTP biosynthesis via de novo pathway; CTP from UDP: step 2/2. Its activity is regulated as follows. Allosterically activated by GTP, when glutamine is the substrate; GTP has no effect on the reaction when ammonia is the substrate. The allosteric effector GTP functions by stabilizing the protein conformation that binds the tetrahedral intermediate(s) formed during glutamine hydrolysis. Inhibited by the product CTP, via allosteric rather than competitive inhibition. In terms of biological role, catalyzes the ATP-dependent amination of UTP to CTP with either L-glutamine or ammonia as the source of nitrogen. Regulates intracellular CTP levels through interactions with the four ribonucleotide triphosphates. This Acinetobacter baumannii (strain AB307-0294) protein is CTP synthase.